The primary structure comprises 242 residues: DNA repair protein RecO (242 aa).

The protein belongs to the RecO family. In terms of assembly, monomer.

Its function is as follows. Involved in DNA repair and RecF pathway recombination. The protein is DNA repair protein RecO of Shigella dysenteriae serotype 1 (strain Sd197).